The chain runs to 188 residues: Peptidyl-tRNA hydrolase (188 aa).

TRNA is bound at residue F15. H20 acts as the Proton acceptor in catalysis. The tRNA site is built by Y64, N66, and N112.

This sequence belongs to the PTH family. As to quaternary structure, monomer.

It is found in the cytoplasm. The catalysed reaction is an N-acyl-L-alpha-aminoacyl-tRNA + H2O = an N-acyl-L-amino acid + a tRNA + H(+). In terms of biological role, hydrolyzes ribosome-free peptidyl-tRNAs (with 1 or more amino acids incorporated), which drop off the ribosome during protein synthesis, or as a result of ribosome stalling. Functionally, catalyzes the release of premature peptidyl moieties from peptidyl-tRNA molecules trapped in stalled 50S ribosomal subunits, and thus maintains levels of free tRNAs and 50S ribosomes. This chain is Peptidyl-tRNA hydrolase, found in Borrelia turicatae (strain 91E135).